A 162-amino-acid polypeptide reads, in one-letter code: uncharacterized protein (162 aa).

The C2H2-type zinc finger occupies 29 to 50; the sequence is CPFCDYTNADAKVVRKHVKSKH. Positions 60–93 are disordered; that stretch reads KLESQKSKNNGKKQTGQKKQGKGKKQPKRVRETC. Over residues 68–87 the composition is skewed to basic residues; sequence NNGKKQTGQKKQGKGKKQPK.

The protein to M.jannaschii MJECS06.

This is an uncharacterized protein from Methanocaldococcus jannaschii (strain ATCC 43067 / DSM 2661 / JAL-1 / JCM 10045 / NBRC 100440) (Methanococcus jannaschii).